Reading from the N-terminus, the 393-residue chain is Riboflavin biosynthesis protein RibBA (393 aa).

Residues 1–200 (MQFDTIELAI…IKSLVAFRKA (200 aa)) form a DHBP synthase region. D-ribulose 5-phosphate-binding positions include 27–28 (RE), Asp32, 139–143 (RNGHT), and Glu163. Mg(2+) is bound at residue Glu28. A Mg(2+)-binding site is contributed by His142. Positions 201-393 (VELNVNLKAK…TKKNKMGHLI (193 aa)) are GTP cyclohydrolase II. 249 to 253 (RMHSA) lines the GTP pocket. Zn(2+) contacts are provided by Cys254, Cys265, and Cys267. GTP-binding positions include Gln270, 291–293 (EGR), and Thr313. The active-site Proton acceptor; for GTP cyclohydrolase activity is Asp325. Catalysis depends on Arg327, which acts as the Nucleophile; for GTP cyclohydrolase activity. Ser348 and Lys353 together coordinate GTP.

This sequence in the N-terminal section; belongs to the DHBP synthase family. The protein in the C-terminal section; belongs to the GTP cyclohydrolase II family. It depends on Mg(2+) as a cofactor. Requires Mn(2+) as cofactor. Zn(2+) is required as a cofactor.

It catalyses the reaction D-ribulose 5-phosphate = (2S)-2-hydroxy-3-oxobutyl phosphate + formate + H(+). It carries out the reaction GTP + 4 H2O = 2,5-diamino-6-hydroxy-4-(5-phosphoribosylamino)-pyrimidine + formate + 2 phosphate + 3 H(+). The protein operates within cofactor biosynthesis; riboflavin biosynthesis; 2-hydroxy-3-oxobutyl phosphate from D-ribulose 5-phosphate: step 1/1. It participates in cofactor biosynthesis; riboflavin biosynthesis; 5-amino-6-(D-ribitylamino)uracil from GTP: step 1/4. In terms of biological role, catalyzes the conversion of D-ribulose 5-phosphate to formate and 3,4-dihydroxy-2-butanone 4-phosphate. Its function is as follows. Catalyzes the conversion of GTP to 2,5-diamino-6-ribosylamino-4(3H)-pyrimidinone 5'-phosphate (DARP), formate and pyrophosphate. The protein is Riboflavin biosynthesis protein RibBA of Staphylococcus epidermidis (strain ATCC 12228 / FDA PCI 1200).